Reading from the N-terminus, the 351-residue chain is DNA polymerase IV (351 aa).

The 182-residue stretch at 4–185 (IIHVDMDCFF…LPLAKIPGVG (182 aa)) folds into the UmuC domain. Residues aspartate 8 and aspartate 103 each coordinate Mg(2+). Residue glutamate 104 is part of the active site.

It belongs to the DNA polymerase type-Y family. Monomer. Mg(2+) serves as cofactor.

The protein resides in the cytoplasm. It carries out the reaction DNA(n) + a 2'-deoxyribonucleoside 5'-triphosphate = DNA(n+1) + diphosphate. Its function is as follows. Poorly processive, error-prone DNA polymerase involved in untargeted mutagenesis. Copies undamaged DNA at stalled replication forks, which arise in vivo from mismatched or misaligned primer ends. These misaligned primers can be extended by PolIV. Exhibits no 3'-5' exonuclease (proofreading) activity. May be involved in translesional synthesis, in conjunction with the beta clamp from PolIII. This is DNA polymerase IV from Escherichia coli O9:H4 (strain HS).